The following is a 101-amino-acid chain: NAD(P)H-quinone oxidoreductase subunit 4L, chloroplastic (101 aa).

3 helical membrane passes run 2 to 22 (MLEH…YGLI), 32 to 52 (MCLE…SDLF), and 61 to 81 (VFSI…PAIV).

The protein belongs to the complex I subunit 4L family. As to quaternary structure, NDH is composed of at least 16 different subunits, 5 of which are encoded in the nucleus.

Its subcellular location is the plastid. The protein localises to the chloroplast thylakoid membrane. It catalyses the reaction a plastoquinone + NADH + (n+1) H(+)(in) = a plastoquinol + NAD(+) + n H(+)(out). The enzyme catalyses a plastoquinone + NADPH + (n+1) H(+)(in) = a plastoquinol + NADP(+) + n H(+)(out). NDH shuttles electrons from NAD(P)H:plastoquinone, via FMN and iron-sulfur (Fe-S) centers, to quinones in the photosynthetic chain and possibly in a chloroplast respiratory chain. The immediate electron acceptor for the enzyme in this species is believed to be plastoquinone. Couples the redox reaction to proton translocation, and thus conserves the redox energy in a proton gradient. This chain is NAD(P)H-quinone oxidoreductase subunit 4L, chloroplastic, found in Nuphar advena (Common spatterdock).